Consider the following 456-residue polypeptide: Enolase (456 aa).

Glutamine 167 is a (2R)-2-phosphoglycerate binding site. Glutamate 209 (proton donor) is an active-site residue. Mg(2+)-binding residues include aspartate 250, glutamate 312, and aspartate 339. The (2R)-2-phosphoglycerate site is built by lysine 364, arginine 393, serine 394, and lysine 415. Lysine 364 functions as the Proton acceptor in the catalytic mechanism.

Belongs to the enolase family. Requires Mg(2+) as cofactor.

Its subcellular location is the cytoplasm. It is found in the secreted. The protein localises to the cell surface. It catalyses the reaction (2R)-2-phosphoglycerate = phosphoenolpyruvate + H2O. It participates in carbohydrate degradation; glycolysis; pyruvate from D-glyceraldehyde 3-phosphate: step 4/5. Functionally, catalyzes the reversible conversion of 2-phosphoglycerate (2-PG) into phosphoenolpyruvate (PEP). It is essential for the degradation of carbohydrates via glycolysis. In Mycoplasmopsis pulmonis (strain UAB CTIP) (Mycoplasma pulmonis), this protein is Enolase.